The primary structure comprises 557 residues: Urocanate hydratase (557 aa).

The interval 1–20 (MSNPRHNEREVRSPRGDELN) is disordered. Residues 52-53 (GG), Gln130, 176-178 (GMG), Glu196, Arg201, 242-243 (NA), 263-267 (QTSAH), 273-274 (YL), and Tyr322 contribute to the NAD(+) site. Cys410 is an active-site residue. Gly492 serves as a coordination point for NAD(+).

This sequence belongs to the urocanase family. The cofactor is NAD(+).

It localises to the cytoplasm. The catalysed reaction is 4-imidazolone-5-propanoate = trans-urocanate + H2O. It participates in amino-acid degradation; L-histidine degradation into L-glutamate; N-formimidoyl-L-glutamate from L-histidine: step 2/3. In terms of biological role, catalyzes the conversion of urocanate to 4-imidazolone-5-propionate. In Brucella abortus (strain S19), this protein is Urocanate hydratase.